Reading from the N-terminus, the 511-residue chain is GATOR complex protein NPRL3 (511 aa).

The interval 37-58 (KPATKAPSKDPQPSSSNPGQCV) is disordered.

Belongs to the NPR3 family. Probably part of the GATOR complex.

Its subcellular location is the lysosome membrane. Functionally, as a component of the GATOR complex may function in the amino acid-sensing branch of the TORC1 signaling pathway. In Caenorhabditis elegans, this protein is GATOR complex protein NPRL3 (nprl-3).